We begin with the raw amino-acid sequence, 405 residues long: Arginine biosynthesis bifunctional protein ArgJ (405 aa).

Residues threonine 152, lysine 178, threonine 189, glutamate 276, asparagine 400, and threonine 405 each coordinate substrate. Catalysis depends on threonine 189, which acts as the Nucleophile.

Belongs to the ArgJ family. As to quaternary structure, heterotetramer of two alpha and two beta chains.

It is found in the cytoplasm. It catalyses the reaction N(2)-acetyl-L-ornithine + L-glutamate = N-acetyl-L-glutamate + L-ornithine. It carries out the reaction L-glutamate + acetyl-CoA = N-acetyl-L-glutamate + CoA + H(+). Its pathway is amino-acid biosynthesis; L-arginine biosynthesis; L-ornithine and N-acetyl-L-glutamate from L-glutamate and N(2)-acetyl-L-ornithine (cyclic): step 1/1. It functions in the pathway amino-acid biosynthesis; L-arginine biosynthesis; N(2)-acetyl-L-ornithine from L-glutamate: step 1/4. Catalyzes two activities which are involved in the cyclic version of arginine biosynthesis: the synthesis of N-acetylglutamate from glutamate and acetyl-CoA as the acetyl donor, and of ornithine by transacetylation between N(2)-acetylornithine and glutamate. The sequence is that of Arginine biosynthesis bifunctional protein ArgJ from Pseudomonas putida (strain ATCC 47054 / DSM 6125 / CFBP 8728 / NCIMB 11950 / KT2440).